Reading from the N-terminus, the 445-residue chain is Exodeoxyribonuclease 7 large subunit (445 aa).

The protein belongs to the XseA family. As to quaternary structure, heterooligomer composed of large and small subunits.

It localises to the cytoplasm. It carries out the reaction Exonucleolytic cleavage in either 5'- to 3'- or 3'- to 5'-direction to yield nucleoside 5'-phosphates.. Its function is as follows. Bidirectionally degrades single-stranded DNA into large acid-insoluble oligonucleotides, which are then degraded further into small acid-soluble oligonucleotides. The protein is Exodeoxyribonuclease 7 large subunit of Shewanella halifaxensis (strain HAW-EB4).